Reading from the N-terminus, the 317-residue chain is MAPAMGNELQHRTVLLEEAVNALVTRVDGIYIDGTFGRGGHSRAVLAKLGEAGRLIAFDKDPLAIATAQQVADPRFEIVHESFASLRDAMSERAVGRVSGVLLDLGVSSPQFDDPERGFSFRADGPLDMRMDPTRGESAADWLARATVQEMTEVIRDYGEERFAFQIAKALVARRAESDRLGPLVSTGELAQIVANVVKTREKGKDPATRTFQAIRIHINQELAELQVVLEAALSLLEQGGRLVVISFHSLEDRIVKRFMQTHSSAPAVDRRLPIRAVDLPSPPLKLLGRVFASDEEVAANPRARSAVMRVAERIAP.

Residues Gly-39–His-41, Asp-59, Phe-83, Asp-104, and Gln-111 each bind S-adenosyl-L-methionine.

It belongs to the methyltransferase superfamily. RsmH family.

It is found in the cytoplasm. It catalyses the reaction cytidine(1402) in 16S rRNA + S-adenosyl-L-methionine = N(4)-methylcytidine(1402) in 16S rRNA + S-adenosyl-L-homocysteine + H(+). Specifically methylates the N4 position of cytidine in position 1402 (C1402) of 16S rRNA. This is Ribosomal RNA small subunit methyltransferase H from Paraburkholderia phymatum (strain DSM 17167 / CIP 108236 / LMG 21445 / STM815) (Burkholderia phymatum).